Here is a 362-residue protein sequence, read N- to C-terminus: tRNA-specific 2-thiouridylase MnmA 1 (362 aa).

Residues 12 to 19 (GMSGGVDS) and Met-38 contribute to the ATP site. Residue Cys-104 is the Nucleophile of the active site. A disulfide bond links Cys-104 and Cys-200. Position 128 (Gly-128) interacts with ATP. An interaction with tRNA region spans residues 150–152 (KDQ). Catalysis depends on Cys-200, which acts as the Cysteine persulfide intermediate. Residues 306 to 307 (RY) form an interaction with tRNA region.

Belongs to the MnmA/TRMU family.

The protein localises to the cytoplasm. The catalysed reaction is S-sulfanyl-L-cysteinyl-[protein] + uridine(34) in tRNA + AH2 + ATP = 2-thiouridine(34) in tRNA + L-cysteinyl-[protein] + A + AMP + diphosphate + H(+). Catalyzes the 2-thiolation of uridine at the wobble position (U34) of tRNA, leading to the formation of s(2)U34. The protein is tRNA-specific 2-thiouridylase MnmA 1 of Clostridium tetani (strain Massachusetts / E88).